The chain runs to 180 residues: Putative 3-methyladenine DNA glycosylase (180 aa).

This sequence belongs to the DNA glycosylase MPG family.

This chain is Putative 3-methyladenine DNA glycosylase, found in Wolbachia pipientis wMel.